The primary structure comprises 391 residues: MTEPETLALLDMKEPETPEKSPPQALVLQSEEEGGTESPGTESLRVGSSVGSPIVREGPEDGPDSTISEAATLPWGTDPHPSAPLPDPPGWRDIEPEPLESEAPTKSEEPFKEDANLLPEKTVRAFVPIDLQCIERKPQEERILHRDAGPGELRNFLPARLSHPEPPERKWAEAVVRPPGRSCGGCGSCGGREALRAVASVVAALIFFPCLLYGAYAFLPFDAPRLPTMSSRLVYTLRCGVFATFPIVLGLLVYGLSLLCFSALRPFGEPRREVEIHRQYVAQSVQLFILYFFNLAVLSTYLPQDTLKLLPLLTGLFAISRLIYWLTFAVGRSFRGFGYGLTFLPLLAMLVWNLYYMFVVEPERMLTASESRLDYPDHARSVSDYRPRSWG.

The interval 1-114 (MTEPETLALL…TKSEEPFKED (114 aa)) is disordered. Topologically, residues 1–200 (MTEPETLALL…GREALRAVAS (200 aa)) are cytoplasmic. Positions 103–114 (APTKSEEPFKED) are enriched in basic and acidic residues. A helical transmembrane segment spans residues 201-221 (VVAALIFFPCLLYGAYAFLPF). The Extracellular portion of the chain corresponds to 222 to 240 (DAPRLPTMSSRLVYTLRCG). A helical membrane pass occupies residues 241-261 (VFATFPIVLGLLVYGLSLLCF). Residues 262 to 279 (SALRPFGEPRREVEIHRQ) lie on the Cytoplasmic side of the membrane. A helical membrane pass occupies residues 280 to 300 (YVAQSVQLFILYFFNLAVLST). Topologically, residues 301-309 (YLPQDTLKL) are extracellular. Residues 310-330 (LPLLTGLFAISRLIYWLTFAV) form a helical membrane-spanning segment. Over 331–339 (GRSFRGFGY) the chain is Cytoplasmic. The helical transmembrane segment at 340-360 (GLTFLPLLAMLVWNLYYMFVV) threads the bilayer. Over 361-391 (EPERMLTASESRLDYPDHARSVSDYRPRSWG) the chain is Extracellular.

In terms of tissue distribution, expressed in the epidermis of the skin. Expressed in epithelial cells of the outermost layer of the stratum granulosum (SG) and in hair follicles (at protein level).

The protein resides in the lysosome. It localises to the golgi apparatus. Its subcellular location is the trans-Golgi network. It is found in the membrane. Contributes to the epidermal integrity and skin barrier function. Plays a role in the lamellar granule (LG) secretory system and in the stratum corneum (SC) epithelial cell formation. The polypeptide is Transmembrane protein 79 (Tmem79) (Mus musculus (Mouse)).